Consider the following 377-residue polypeptide: uncharacterized protein (377 aa).

4 consecutive transmembrane segments (helical) span residues threonine 26–isoleucine 46, threonine 67–isoleucine 87, phenylalanine 108–threonine 128, and isoleucine 135–isoleucine 155.

Its subcellular location is the cell membrane. This is an uncharacterized protein from Methanocaldococcus jannaschii (strain ATCC 43067 / DSM 2661 / JAL-1 / JCM 10045 / NBRC 100440) (Methanococcus jannaschii).